The primary structure comprises 248 residues: Probable capsular polysaccharide biosynthesis protein YwqC (248 aa).

2 helical membrane-spanning segments follow: residues 18–38 (ILLIMIVTAAATAAGGLISFF) and 174–194 (LLNIAIAFAAGLAGSIGLAFL).

The protein belongs to the CpsC/CapA family. Post-translationally, not phosphorylated in vitro by YwqD.

It localises to the cell membrane. It participates in capsule biogenesis; capsule polysaccharide biosynthesis. Its function is as follows. Required for YwqD kinase activity. May bring YwqD and its substrates into contact. Probably involved in the regulation of capsular polysaccharide biosynthesis. This Bacillus subtilis (strain 168) protein is Probable capsular polysaccharide biosynthesis protein YwqC (ywqC).